The sequence spans 155 residues: Putative pre-16S rRNA nuclease (155 aa).

Belongs to the YqgF nuclease family.

It localises to the cytoplasm. Could be a nuclease involved in processing of the 5'-end of pre-16S rRNA. The polypeptide is Putative pre-16S rRNA nuclease (Xylella fastidiosa (strain M23)).